A 942-amino-acid chain; its full sequence is Lon protease homolog 4, chloroplastic/mitochondrial (942 aa).

A Phosphoserine modification is found at S54. A Lon N-terminal domain is found at 79–301; that stretch reads VIALPLPHKP…LTLELVKKEV (223 aa). Position 456 to 463 (456 to 463) interacts with ATP; that stretch reads GPTGVGKT. The disordered stretch occupies residues 673-725; that stretch reads ISDDVTTDTEETKSLAKTDLESPETSAEGSTVLTDELATGDPTESTTEQSGEV. Basic and acidic residues predominate over residues 682–692; sequence EETKSLAKTDL. Residues 695–705 show a composition bias toward polar residues; sequence PETSAEGSTVL. The Lon proteolytic domain maps to 756-940; it reads QTPVGVVMGL…EQIFELAFGY (185 aa). Active-site residues include S846 and K889.

Belongs to the peptidase S16 family. Homohexamer or homoheptamer. Organized in a ring with a central cavity.

Its subcellular location is the mitochondrion matrix. The protein resides in the plastid. It is found in the chloroplast thylakoid membrane. It catalyses the reaction Hydrolysis of proteins in presence of ATP.. In terms of biological role, ATP-dependent serine protease that mediates the selective degradation of misfolded, unassembled or oxidatively damaged polypeptides as well as certain short-lived regulatory proteins in the mitochondrial matrix. May also have a chaperone function in the assembly of inner membrane protein complexes. Participates in the regulation of mitochondrial gene expression and in the maintenance of the integrity of the mitochondrial genome. Binds to mitochondrial DNA in a site-specific manner. The polypeptide is Lon protease homolog 4, chloroplastic/mitochondrial (LON4) (Arabidopsis thaliana (Mouse-ear cress)).